Here is a 25-residue protein sequence, read N- to C-terminus: M-poneritoxin-Na1b (25 aa).

The protein belongs to the non-disulfide-bridged peptide (NDBP) superfamily. Medium-length antimicrobial peptide (group 3) family. Ponericin-W subfamily. As to expression, expressed by the venom gland.

Its subcellular location is the secreted. The protein resides in the target cell membrane. Functionally, membrane-perturbating peptide with multiple activities. It is insecticidal, since it induces reversible paralysis in insects (L.cuprina) after 1 hour, but fails to kill flies. It shows a relatively strong and broad-spectrum antibacterial activity against both Gram-positive and Gram-negative bacteria (MIC&lt;20 uM). It is also anthelmintic, since it potently inhibits the larval development of the major pathogenic nematode of ruminants (H.contortus, IC(50)=2.8 uM). Interestingly, only at 10 uM, it increases adult males motility of the other nematode B.malayi for 24 hours post-treatment, followed by a reduction in motility for the rest of the experiment. It shows cytotoxic activity against HEK293 cells (EC(50)=4-6 uM) and induces hemolysis in human erythrocytes (EC(50)=40-62 uM). In addition, it causes an important increase in intracellular calcium concentration on neuronal and epithelial cell lines, which supports a non-specific membrane perturbation mechanism of action. In vivo, it induces pain by intraplantar injection into mice, suggesting a defensive function against vertebrate predators. In Neoponera apicalis (Ant), this protein is M-poneritoxin-Na1b.